The following is a 1054-amino-acid chain: Bifunctional glutamine synthetase adenylyltransferase/adenylyl-removing enzyme (1054 aa).

Positions 1-535 (MRKTLPSIGA…LHRKLFYRPL (535 aa)) are adenylyl removase. Polar residues-rich tracts occupy residues 138–150 (SFSS…QGSD) and 165–175 (DTANTDLSTPG). The interval 138-175 (SFSSESQQPQGSDSDSEFSFGADLSADDTANTDLSTPG) is disordered. Residues 541–1054 (NISVGTLKLS…WGVDSIEHDY (514 aa)) are adenylyl transferase.

This sequence belongs to the GlnE family. Requires Mg(2+) as cofactor.

It catalyses the reaction [glutamine synthetase]-O(4)-(5'-adenylyl)-L-tyrosine + phosphate = [glutamine synthetase]-L-tyrosine + ADP. It carries out the reaction [glutamine synthetase]-L-tyrosine + ATP = [glutamine synthetase]-O(4)-(5'-adenylyl)-L-tyrosine + diphosphate. Involved in the regulation of glutamine synthetase GlnA, a key enzyme in the process to assimilate ammonia. When cellular nitrogen levels are high, the C-terminal adenylyl transferase (AT) inactivates GlnA by covalent transfer of an adenylyl group from ATP to specific tyrosine residue of GlnA, thus reducing its activity. Conversely, when nitrogen levels are low, the N-terminal adenylyl removase (AR) activates GlnA by removing the adenylyl group by phosphorolysis, increasing its activity. The regulatory region of GlnE binds the signal transduction protein PII (GlnB) which indicates the nitrogen status of the cell. The polypeptide is Bifunctional glutamine synthetase adenylyltransferase/adenylyl-removing enzyme (Corynebacterium diphtheriae (strain ATCC 700971 / NCTC 13129 / Biotype gravis)).